Reading from the N-terminus, the 430-residue chain is MMRDVFRPTKSAPCSPAKPLGISRTQSESFHAIHKVPVGDSPYVRAKNVQLVEKDPERAIPLFWKAINAGDRVDSALKDMAIVMKQQNRAEEAIEAIKSLRVRCSDQAQESLDNILLDLYKRCGRLDDQIGLLKHKLFLIQKGLAFNGKRTKTARSQGKKFQVSVEQEATRLLGNLGWALMQRDNFVEAEDAYRRALSIAPDNNKMCNLGICLMKQGRIDEAKETLRRVKPAVVDGPRGVDSHLKAYERAQQMLNDLGSEMMRRGGDDKVEQRRLFDAIFGSSSIWQPQPCSEQTVKAKPKPGLSNGDGYGDENVKMSVNPVVVNPLRVDAKPFFSSKLVISNNEKLKRTRSSSQGMGMLSGIGGDHEGETNTSTRRRLSMEKKATECGLPDNKDFEDAIMAAVLGTETKVDKKRLKVFQDITLCLNQSL.

The interval 1–21 is disordered; the sequence is MMRDVFRPTKSAPCSPAKPLG. 6 TPR repeats span residues 40–73, 74–107, 110–143, 170–203, 205–236, and 238–257; these read DSPYVRAKNVQLVEKDPERAIPLFWKAINAGDRV, DSALKDMAIVMKQQNRAEEAIEAIKSLRVRCSDQ, ESLDNILLDLYKRCGRLDDQIGLLKHKLFLIQKG, TRLLGNLGWALMQRDNFVEAEDAYRRALSIAPDN, KMCNLGICLMKQGRIDEAKETLRRVKPAVVDG, and RGVDSHLKAYERAQQMLNDL. The stretch at 81 to 107 forms a coiled coil; that stretch reads AIVMKQQNRAEEAIEAIKSLRVRCSDQ. The tract at residues 346–376 is disordered; the sequence is KLKRTRSSSQGMGMLSGIGGDHEGETNTSTR.

The protein belongs to the MS5 protein family.

The protein localises to the nucleus. In terms of biological role, probably involved in the regulation of cell division. In Arabidopsis thaliana (Mouse-ear cress), this protein is Protein POLLENLESS 3-LIKE 2.